A 208-amino-acid polypeptide reads, in one-letter code: Putative 3-methyladenine DNA glycosylase (208 aa).

This sequence belongs to the DNA glycosylase MPG family.

The chain is Putative 3-methyladenine DNA glycosylase from Lactobacillus johnsonii (strain CNCM I-12250 / La1 / NCC 533).